The sequence spans 231 residues: Cytolethal distending toxin subunit A (231 aa).

The first 15 residues, 1-15 (MRLLFFLLITLLFAA), serve as a signal peptide directing secretion. Cys-16 carries the N-palmitoyl cysteine lipid modification. Cys-16 carries the S-diacylglycerol cysteine lipid modification. Positions 20-51 (PKVHQPKHSSKTEKDLGIGLSPTPPPNERIPG) are disordered. A mediates binding to target cells region spans residues 99–110 (WALKPRNWVWGY). The region spanning 130 to 217 (SNGQVIIKNM…SSNLDQQWYI (88 aa)) is the Ricin B-type lectin domain.

In terms of assembly, heterotrimer of 3 subunits, CdtA, CdtB and CdtC.

It localises to the cell outer membrane. Its function is as follows. CDTs are cytotoxins which induce cell distension, growth arrest in G2/M phase, nucleus swelling, and chromatin fragmentation in HeLa cells. The protein is Cytolethal distending toxin subunit A (cdtA) of Helicobacter hepaticus (strain ATCC 51449 / 3B1).